Here is a 55-residue protein sequence, read N- to C-terminus: Large ribosomal subunit protein bL33A (55 aa).

Belongs to the bacterial ribosomal protein bL33 family.

This is Large ribosomal subunit protein bL33A from Mycobacterium sp. (strain JLS).